An 86-amino-acid polypeptide reads, in one-letter code: Large ribosomal subunit protein bL31 (86 aa).

Residues 66–86 (GMGSADSATSQETKEAKESDK) form a disordered region. Over residues 77-86 (ETKEAKESDK) the composition is skewed to basic and acidic residues.

This sequence belongs to the bacterial ribosomal protein bL31 family. Type A subfamily. In terms of assembly, part of the 50S ribosomal subunit.

Binds the 23S rRNA. The polypeptide is Large ribosomal subunit protein bL31 (Prochlorococcus marinus (strain MIT 9515)).